We begin with the raw amino-acid sequence, 156 residues long: ATP synthase subunit b (156 aa).

Residues 11-31 (AIAFVLFVMFCMKFVWPPIMA) traverse the membrane as a helical segment.

This sequence belongs to the ATPase B chain family. F-type ATPases have 2 components, F(1) - the catalytic core - and F(0) - the membrane proton channel. F(1) has five subunits: alpha(3), beta(3), gamma(1), delta(1), epsilon(1). F(0) has three main subunits: a(1), b(2) and c(10-14). The alpha and beta chains form an alternating ring which encloses part of the gamma chain. F(1) is attached to F(0) by a central stalk formed by the gamma and epsilon chains, while a peripheral stalk is formed by the delta and b chains.

It localises to the cell inner membrane. Functionally, f(1)F(0) ATP synthase produces ATP from ADP in the presence of a proton or sodium gradient. F-type ATPases consist of two structural domains, F(1) containing the extramembraneous catalytic core and F(0) containing the membrane proton channel, linked together by a central stalk and a peripheral stalk. During catalysis, ATP synthesis in the catalytic domain of F(1) is coupled via a rotary mechanism of the central stalk subunits to proton translocation. Component of the F(0) channel, it forms part of the peripheral stalk, linking F(1) to F(0). In Photorhabdus laumondii subsp. laumondii (strain DSM 15139 / CIP 105565 / TT01) (Photorhabdus luminescens subsp. laumondii), this protein is ATP synthase subunit b.